The primary structure comprises 297 residues: HTH-type transcriptional regulator PerR (297 aa).

The HTH lysR-type domain maps to 7 to 64 (APLNLLRAFEAAGRTGAFALAASELELSPSAISHAIRKLENLLDVRLFQRSTREITLT). Residues 24-44 (FALAASELELSPSAISHAIRK) constitute a DNA-binding region (H-T-H motif).

The protein belongs to the LysR transcriptional regulatory family.

Apparent regulatory gene involved in peroxide resistance in stationary phase. The polypeptide is HTH-type transcriptional regulator PerR (perR) (Escherichia coli (strain K12)).